A 907-amino-acid chain; its full sequence is Phototropin-2 (907 aa).

The segment at 28–84 (ATAGLEIVAEDAPSGSSGAHQQQAWRPVAPATAGRDSGGTGSGKSSVDGGVGRASHD) is disordered. The span at 41-51 (SGSSGAHQQQA) shows a compositional bias: polar residues. A PAS 1 domain is found at 89–162 (VSQELKDALS…AKIRDAVKHG (74 aa)). FMN contacts are provided by residues 138-143 (NCRFLQ), arginine 156, asparagine 171, asparagine 181, and glutamine 202. At cysteine 139 the chain carries S-4a-FMN cysteine. In terms of domain architecture, PAC 1 spans 163–217 (RSFCGRLLNYRKDGAPFWNLLTVTPIRDDNGKVIKFIGMQVEVSKYTEGLSDKRM). The tract at residues 332–363 (RSSVGSREAPAVVEEPAPAPPPAPEVVERTDS) is disordered. The PAS 2 domain occupies 375 to 448 (QGIDLATTLE…DKIREAIREQ (74 aa)). FMN contacts are provided by residues 424 to 429 (NCRFLQ), arginine 442, asparagine 457, asparagine 467, and glutamine 488. At cysteine 425 the chain carries S-4a-FMN cysteine. One can recognise a PAC 2 domain in the interval 449–503 (KEITVQLINYTKSGKKFWNLFHLQPMRDQKGELQYFIGVQLDGSDHVEPLRNRLS). The Protein kinase domain occupies 576 to 863 (FKPVKPLGCG…ANDIKQHSFF (288 aa)). Residues 582–590 (LGCGDTGSV) and lysine 605 each bind ATP. Aspartate 701 serves as the catalytic Proton acceptor.

This sequence belongs to the protein kinase superfamily. Ser/Thr protein kinase family. In terms of assembly, homodimer. FMN is required as a cofactor. Post-translationally, autophosphorylated in response to blue light irradiation. 2 molecules of FMN bind covalently to cysteines after exposure to blue light and are reversed in the dark. As to expression, expressed at low levels in leaves of dark-grown seedlings.

It catalyses the reaction L-seryl-[protein] + ATP = O-phospho-L-seryl-[protein] + ADP + H(+). It carries out the reaction L-threonyl-[protein] + ATP = O-phospho-L-threonyl-[protein] + ADP + H(+). In terms of biological role, protein kinase that acts as a blue light photoreceptor in a signal-transduction pathway for phototropic responses. Regulates a wide range of physiological activities in plants that maximize the efficiency of photosynthesis, such as chloroplast relocations, stomata opening, and leaf expansion. This chain is Phototropin-2 (PHOT2), found in Oryza sativa subsp. japonica (Rice).